The following is a 505-amino-acid chain: Metal transporter Nramp3.2 (505 aa).

12 consecutive transmembrane segments (helical) span residues 50-70 (LWLF…PGNL), 78-98 (AIAG…GLLV), 127-147 (MVLW…EVIG), 159-179 (FVPL…FLFL), 187-207 (LEAV…WMFA), 233-253 (AVGV…SALV), 280-300 (ALVI…KGFY), 321-341 (YGGG…AAGQ), 369-389 (ALIT…VFDT), 400-420 (WLNV…LCLV), 439-459 (AWLV…DFFF), and 466-486 (AFTT…IYLI).

The protein belongs to the NRAMP (TC 2.A.55) family. In terms of tissue distribution, expressed in roots, stems, buds and leaves.

Its subcellular location is the vacuole membrane. The catalysed reaction is Mn(2+)(in) = Mn(2+)(out). The enzyme catalyses Fe(2+)(in) = Fe(2+)(out). Divalent metal transporter. Can transport manganese (Mn) and iron (Fe). Involved in the release of metals stored in the vacuole. The polypeptide is Metal transporter Nramp3.2 (Populus trichocarpa (Western balsam poplar)).